A 118-amino-acid polypeptide reads, in one-letter code: Small ribosomal subunit protein uS13 (118 aa).

Residues 96–118 (PLRGQRTRTNARTRKGPRKAIKK) are disordered.

The protein belongs to the universal ribosomal protein uS13 family. As to quaternary structure, part of the 30S ribosomal subunit. Forms a loose heterodimer with protein S19. Forms two bridges to the 50S subunit in the 70S ribosome.

Its function is as follows. Located at the top of the head of the 30S subunit, it contacts several helices of the 16S rRNA. In the 70S ribosome it contacts the 23S rRNA (bridge B1a) and protein L5 of the 50S subunit (bridge B1b), connecting the 2 subunits; these bridges are implicated in subunit movement. Contacts the tRNAs in the A and P-sites. The chain is Small ribosomal subunit protein uS13 from Stenotrophomonas maltophilia (strain K279a).